A 34-amino-acid polypeptide reads, in one-letter code: Non-cysteinic peptide Bs 10 (34 aa).

The tract at residues 1-34 (VTMGYIKDGDGKKIAKKKNKNGRKHVEIDLNKVG) is disordered. The span at 14–23 (IAKKKNKNGR) shows a compositional bias: basic residues. The span at 24–34 (KHVEIDLNKVG) shows a compositional bias: basic and acidic residues.

In terms of tissue distribution, expressed by the venom gland.

It is found in the secreted. In Hottentotta tamulus sindicus (Scorpion), this protein is Non-cysteinic peptide Bs 10.